Reading from the N-terminus, the 904-residue chain is Alanine--tRNA ligase (904 aa).

Residues His603, His607, Cys707, and His711 each contribute to the Zn(2+) site.

It belongs to the class-II aminoacyl-tRNA synthetase family. Zn(2+) is required as a cofactor.

The protein localises to the cytoplasm. It carries out the reaction tRNA(Ala) + L-alanine + ATP = L-alanyl-tRNA(Ala) + AMP + diphosphate. Its function is as follows. Catalyzes the attachment of alanine to tRNA(Ala) in a two-step reaction: alanine is first activated by ATP to form Ala-AMP and then transferred to the acceptor end of tRNA(Ala). Also edits incorrectly charged Ser-tRNA(Ala) and Gly-tRNA(Ala) via its editing domain. The protein is Alanine--tRNA ligase of Sulfurisphaera tokodaii (strain DSM 16993 / JCM 10545 / NBRC 100140 / 7) (Sulfolobus tokodaii).